The primary structure comprises 1009 residues: Delphilin (1009 aa).

Disordered regions lie at residues 28 to 82 (CRSK…SNTM), 170 to 193 (EGPVDYPQSDSEPEETPSAPRSRS), 322 to 369 (ASPD…SRDT), 414 to 635 (ELSS…SDNN), and 990 to 1009 (SETQGTENPKSPRIASPLAW). Basic and acidic residues predominate over residues 44-53 (RSQDHHERPQ). A PDZ domain is found at 95 to 172 (TIRVYRGKKS…MPSLVVEEGP (78 aa)). Residues 322–332 (ASPDSVDSNPY) show a composition bias toward polar residues. Low complexity-rich tracts occupy residues 334-352 (SLDSPPASPLPSDELSPLP) and 427-439 (DDSTSVSYSSGSD). 3 stretches are compositionally biased toward pro residues: residues 441 to 455 (IPPPPQSPPPPPPPL), 462 to 477 (SPLPITPEHLPQPPPA), and 484 to 493 (IAPPPPPPRP). The segment covering 521–535 (SSPQPSSQPILQLHQ) has biased composition (low complexity). Over residues 557-602 (AQHTRLQHPSQSIYQSQQTTVPRTSPSLTKQKSLHSQPSQQSFEGT) the composition is skewed to polar residues. Pro residues predominate over residues 607–628 (VPPPPPPPLPPPCDPPPLPKPS). The region spanning 629–1009 (PKASDNNHMS…SPRIASPLAW (381 aa)) is the FH2 domain.

The protein localises to the postsynaptic cell membrane. Functionally, postsynaptic scaffolding protein. This is Delphilin (grid2ip) from Danio rerio (Zebrafish).